A 522-amino-acid chain; its full sequence is F-box only protein 7 (522 aa).

2 disordered regions span residues 1-20 and 85-128; these read MKLR…PESE and PNLP…HGQV. Residues 1 to 88 are ubiquitin-like; the sequence is MKLRVRLQKR…EDEMPAPNLP (88 aa). The span at 87 to 114 shows a compositional bias: polar residues; it reads LPSSTDSEHSSLQNNDQPPLAATSSQAN. The segment at 92–129 is important for interaction with PINK1; sequence DSEHSSLQNNDQPPLAATSSQANIPDEQGSDSSHGQVT. The interval 129–169 is important for interaction with CDK6; sequence TQYDAWTDDSMEGPSHSAEAVSIQDAMSVEEASGFHPLEPM. An important for dimerization and interaction with PSMF1 region spans residues 180–324; the sequence is PHSLEALYQS…PLLAFTRQVL (145 aa). Residues 329–375 form the F-box domain; sequence VFGLVVLPLELKLRIFRLLDVHSVLALSAVCHDLLIASNDPLLWRCL. Residues 381–522 are important for interaction with CDK6; that stretch reads RDSTIRGPDT…RSADNRLPYL (142 aa). Arginine 431 and arginine 451 each carry omega-N-methylarginine. Positions 459–522 are disordered; sequence DPVTSLIPRP…RSADNRLPYL (64 aa). The short motif at 481 to 484 is the RFDP motif element; the sequence is RFDP. Arginine 518 is subject to Asymmetric dimethylarginine.

As to quaternary structure, part of the SCF (SKP1-CUL1-F-box) E3 ubiquitin-protein ligase complex SCF(FBXO7) formed of CUL1, SKP1, RBX1 and FBXO7. Interacts via its C-terminal proline-rich region with DLGAP5. Interacts with BIRC2. Interacts with CDK6 and promotes its interaction with D-type cyclin. Interacts (via the N-terminal Ubl domain) with PRKN. Interacts (via N-terminal region) with PINK1. Interacts with PSMF1.

Its subcellular location is the cytoplasm. The protein resides in the nucleus. The protein localises to the mitochondrion. It localises to the cytosol. Its pathway is protein modification; protein ubiquitination. In terms of biological role, substrate recognition component of a SCF (SKP1-CUL1-F-box protein) E3 ubiquitin-protein ligase complex which mediates the ubiquitination and subsequent proteasomal degradation of target proteins and plays a role in several biological processes such as cell cycle, cell proliferation, or maintenance of chromosome stability. Recognizes and ubiquitinates BIRC2 and the cell cycle regulator DLGAP5. Plays a role downstream of PINK1 in the clearance of damaged mitochondria via selective autophagy (mitophagy) by targeting PRKN to dysfunctional depolarized mitochondria. Promotes MFN1 ubiquitination. Mediates the ubiquitination and proteasomal degradation of UXT isoform 2, thereby impairing the NF-kappa-B signaling pathway. Inhibits NF-kappa-B pathway also by promoting the ubiquitinatioin of TRAF2. Affects the assembly state and activity of the proteasome in the cells including neurons by ubiquitinating the proteasomal subunit PSMA2 via 'Lys-63'-linked polyubiquitin chains. Promotes 'Lys-48'-linked polyubiquitination SIRT7, leading to the hydrogen peroxide-induced cell death. The polypeptide is F-box only protein 7 (Fbxo7) (Rattus norvegicus (Rat)).